Here is a 342-residue protein sequence, read N- to C-terminus: Phosphate acyltransferase (342 aa).

It belongs to the PlsX family. Homodimer. Probably interacts with PlsY.

It localises to the cytoplasm. The catalysed reaction is a fatty acyl-[ACP] + phosphate = an acyl phosphate + holo-[ACP]. It functions in the pathway lipid metabolism; phospholipid metabolism. Functionally, catalyzes the reversible formation of acyl-phosphate (acyl-PO(4)) from acyl-[acyl-carrier-protein] (acyl-ACP). This enzyme utilizes acyl-ACP as fatty acyl donor, but not acyl-CoA. The polypeptide is Phosphate acyltransferase (Pelotomaculum thermopropionicum (strain DSM 13744 / JCM 10971 / SI)).